The chain runs to 360 residues: Nucleoporin SEH1 (360 aa).

WD repeat units lie at residues 10–49 (DHKD…EWHC), 55–96 (THSG…SNDK), 111–152 (DSRT…NLSQ), 160–210 (SCKL…RKYA), 217–258 (TVTD…KELT), and 276–315 (NHNS…NWKC). A Glycyl lysine isopeptide (Lys-Gly) (interchain with G-Cter in SUMO2) cross-link involves residue Lys12. Ser190 carries the phosphoserine modification. The segment covering 324-342 (SPVNGSSQQGNSNPSVGSN) has biased composition (low complexity). Residues 324–360 (SPVNGSSQQGNSNPSVGSNIPSLQNSLNGSSAGRKHS) form a disordered region. Residues 343 to 354 (IPSLQNSLNGSS) show a composition bias toward polar residues.

The protein belongs to the WD repeat SEC13 family. As to quaternary structure, component of the Nup107-160 subcomplex of the nuclear pore complex (NPC). The Nup107-160 subcomplex includes NUP160, NUP133, NUP107, NUP98, NUP85, NUP43, NUP37, SEH1 and SEC13. The SEH1 subunit appears to be only weakly associated with the Nup107-160 subcomplex. Component of the GATOR2 subcomplex, composed of MIOS, SEC13, SEH1L, WDR24 and WDR59. The GATOR2 complex interacts with CASTOR1 and CASTOR2; the interaction is negatively regulated by arginine. The GATOR2 complex interacts with SESN1, SESN2 and SESN3; the interaction is negatively regulated by amino acids. SESN1, SESN2 and SESN3 convey leucine availability via direct interaction with SEH1L and WDR24.

The protein resides in the chromosome. The protein localises to the centromere. It localises to the kinetochore. It is found in the nucleus. Its subcellular location is the nuclear pore complex. The protein resides in the lysosome membrane. The GATOR2 complex is negatively regulated by the upstream amino acid sensors CASTOR1 and SESN2, which sequester the GATOR2 complex in absence of amino acids. In the presence of abundant amino acids, GATOR2 is released from CASTOR1 and SESN2 and activated. Its function is as follows. Component of the Nup107-160 subcomplex of the nuclear pore complex (NPC). The Nup107-160 subcomplex is required for the assembly of a functional NPC. The Nup107-160 subcomplex is also required for normal kinetochore microtubule attachment, mitotic progression and chromosome segregation. This subunit plays a role in recruitment of the Nup107-160 subcomplex to the kinetochore. In terms of biological role, as a component of the GATOR2 complex, functions as an activator of the amino acid-sensing branch of the mTORC1 signaling pathway. The GATOR2 complex indirectly activates mTORC1 through the inhibition of the GATOR1 subcomplex. GATOR2 probably acts as an E3 ubiquitin-protein ligase toward GATOR1. In the presence of abundant amino acids, the GATOR2 complex mediates ubiquitination of the NPRL2 core component of the GATOR1 complex, leading to GATOR1 inactivation. In the absence of amino acids, GATOR2 is inhibited, activating the GATOR1 complex. Within the GATOR2 complex, SEC13 and SEH1L are required to stabilize the complex. The sequence is that of Nucleoporin SEH1 (SEH1L) from Bos taurus (Bovine).